Consider the following 2785-residue polypeptide: Testis-expressed protein 15 (2785 aa).

Positions 262–274 (SSSFPSSLSNAFS) are enriched in low complexity. Disordered regions lie at residues 262–331 (SSSF…PSSD), 596–620 (EQRD…SEKQ), 661–683 (NGKP…APND), 904–924 (TEST…GMCS), 943–1064 (VQES…QGRI), 2276–2458 (NRQE…TNDK), 2470–2511 (DIDA…LVPD), and 2571–2601 (TQPI…GNSA). Residues 275 to 286 (DVRKQKHSEEQV) are compositionally biased toward basic and acidic residues. Residues 314–331 (TCSNDSQGHFSQESPSSD) show a composition bias toward polar residues. The span at 596-611 (EQRDDKNPNEAKEHNT) shows a compositional bias: basic and acidic residues. Composition is skewed to polar residues over residues 962–989 (HNTH…TVMN) and 1021–1031 (HASSSRGQNIA). Residues 1033-1042 (KDLREHETHE) show a composition bias toward basic and acidic residues. Composition is skewed to polar residues over residues 1049–1064 (SHGS…QGRI), 2291–2314 (DSSQ…NISD), 2327–2338 (EVSQGKGNTDTV), 2353–2387 (NIQT…SISA), 2394–2415 (RQSS…CTPK), 2431–2454 (ASLT…SVAE), 2491–2502 (DHTQISPSNLTA), and 2585–2601 (DAPN…GNSA).

Belongs to the TEX15 family. Interacts with PIWIL4. Interacts with PIWIL2. Detected in testis and ovary, and at lower levels in lung and brain.

The protein localises to the cytoplasm. It is found in the nucleus. Required during spermatogenesis for normal chromosome synapsis and meiotic recombination in germ cells. Necessary for formation of DMC1 and RAD51 foci on meiotic chromosomes, suggesting a specific role in DNA double-stranded break repair. Essential executor of PIWIL4-piRNA pathway directed transposon DNA methylation and silencing in the male embryonic germ cells. PIWIL4-piRNA binds to nascent transposon transcripts and interacts with TEX15, which may in turn recruit the epigenetic silencing machinery to the transposon loci. Not required for piRNA biosynthesis. In Mus musculus (Mouse), this protein is Testis-expressed protein 15.